The following is a 2241-amino-acid chain: Large tegument protein deneddylase (2241 aa).

Residues 1–238 (MKVTQASCHQ…IDLTGVVRES (238 aa)) are deubiquitination activity. Residues 4–226 (TQASCHQGDI…AARLVSTYRD (223 aa)) form the Peptidase C76 domain. Catalysis depends on residues C24, D160, and H162. The tract at residues 239–314 (ADTAATTTTA…STTSKTLATA (76 aa)) is disordered. Positions 240-250 (DTAATTTTAAP) are enriched in low complexity. The segment covering 251–268 (SLPPLPDPIVDPGCPPGV) has biased composition (pro residues). Positions 304–314 (PSTTSKTLATA) are enriched in low complexity. The segment at 327–331 (SSAVP) is interaction with inner tegument protein. Positions 1170-1229 (RSSQQKMEEQLQETRQQMTETSERLDRSLRQDPGSSSVTRVPEKPFKGQELAGRITPPPA) are disordered. Positions 1190–1199 (TSERLDRSLR) are enriched in basic and acidic residues.

This sequence belongs to the herpesviridae large tegument protein family. In terms of assembly, interacts with host CUL1 and CUL4A; these interactions inhibit the E3 ligase activity of cullins. Interacts with inner tegument protein. Interacts with capsid vertex specific component CVC2. Interacts with the major capsid protein/MCP.

It is found in the virion tegument. The protein resides in the host cytoplasm. It localises to the host nucleus. The enzyme catalyses Thiol-dependent hydrolysis of ester, thioester, amide, peptide and isopeptide bonds formed by the C-terminal Gly of ubiquitin (a 76-residue protein attached to proteins as an intracellular targeting signal).. In terms of biological role, large tegument protein that plays multiple roles in the viral cycle. During viral entry, remains associated with the capsid while most of the tegument is detached and participates in the capsid transport toward the host nucleus. Plays a role in the routing of the capsid at the nuclear pore complex and subsequent uncoating. Within the host nucleus, acts as a deneddylase and promotes the degradation of nuclear CRLs (cullin-RING ubiquitin ligases) and thereby stabilizes nuclear CRL substrates, while cytoplasmic CRLs remain unaffected. These modifications prevent host cell cycle S-phase progression and create a favorable environment allowing efficient viral genome replication. Participates later in the secondary envelopment of capsids. Indeed, plays a linker role for the association of the outer viral tegument to the capsids together with the inner tegument protein. This Human cytomegalovirus (strain AD169) (HHV-5) protein is Large tegument protein deneddylase (UL48).